The primary structure comprises 420 residues: Dihydrolipoyllysine-residue succinyltransferase component of 2-oxoglutarate dehydrogenase complex (420 aa).

The Lipoyl-binding domain occupies 3 to 78 (KINILVPDLP…ISQQTLGEIN (76 aa)). Lys-44 is subject to N6-lipoyllysine. Residues His-391 and Asp-395 contribute to the active site.

This sequence belongs to the 2-oxoacid dehydrogenase family. Forms a 24-polypeptide structural core with octahedral symmetry. Part of the 2-oxoglutarate dehydrogenase (OGDH) complex composed of E1 (2-oxoglutarate dehydrogenase), E2 (dihydrolipoamide succinyltransferase) and E3 (dihydrolipoamide dehydrogenase); the complex contains multiple copies of the three enzymatic components (E1, E2 and E3). It depends on (R)-lipoate as a cofactor.

It catalyses the reaction N(6)-[(R)-dihydrolipoyl]-L-lysyl-[protein] + succinyl-CoA = N(6)-[(R)-S(8)-succinyldihydrolipoyl]-L-lysyl-[protein] + CoA. Its pathway is amino-acid degradation; L-lysine degradation via saccharopine pathway; glutaryl-CoA from L-lysine: step 6/6. Its function is as follows. E2 component of the 2-oxoglutarate dehydrogenase (OGDH) complex which catalyzes the second step in the conversion of 2-oxoglutarate to succinyl-CoA and CO(2). The polypeptide is Dihydrolipoyllysine-residue succinyltransferase component of 2-oxoglutarate dehydrogenase complex (sucB) (Buchnera aphidicola subsp. Acyrthosiphon pisum (strain APS) (Acyrthosiphon pisum symbiotic bacterium)).